The chain runs to 352 residues: MQFIDQAEIQVEAGKGGDGMVAFRREKFVPAGGPAGGNGGRGGSVVLVAVANLQTLLDFKFQRVFKAENGKRGGPKNMTGAGGSDRLIEVPPGTMIYDRETEELLGDLVKPGQTCCVAQGGKGGLGNKHFLSNSNRAPEYALPGLDGEVRMLRLELKLLAEVGIIGLPNAGKSTLIAALSAARPKIADYPFTTLVPNLGVVRKPTGDGTVFADIPGLIEGASAGLGLGHEFLRHIERTRLLLHLVDITDVDPVENFETIQNELEVYGRSLEDKRQVLALNKVDAVDVKGAEIQELVNRFREISGGKVFLISAVAGIGLEELMQEIWGLLEMEEEVKSSELTPTPPLVSREES.

One can recognise an Obg domain in the interval 1–159; the sequence is MQFIDQAEIQ…RMLRLELKLL (159 aa). An OBG-type G domain is found at 160–330; that stretch reads AEVGIIGLPN…LMQEIWGLLE (171 aa). GTP-binding positions include 166-173, 191-195, 213-216, 280-283, and 311-313; these read GLPNAGKS, FTTLV, DIPG, NKVD, and SAV. Residues Ser173 and Thr193 each coordinate Mg(2+).

The protein belongs to the TRAFAC class OBG-HflX-like GTPase superfamily. OBG GTPase family. As to quaternary structure, monomer. The cofactor is Mg(2+).

The protein resides in the cytoplasm. In terms of biological role, an essential GTPase which binds GTP, GDP and possibly (p)ppGpp with moderate affinity, with high nucleotide exchange rates and a fairly low GTP hydrolysis rate. Plays a role in control of the cell cycle, stress response, ribosome biogenesis and in those bacteria that undergo differentiation, in morphogenesis control. The polypeptide is GTPase Obg (Trichodesmium erythraeum (strain IMS101)).